Consider the following 208-residue polypeptide: ATP-dependent Clp protease proteolytic subunit (208 aa).

Ser-107 acts as the Nucleophile in catalysis. The active site involves His-132.

This sequence belongs to the peptidase S14 family. In terms of assembly, fourteen ClpP subunits assemble into 2 heptameric rings which stack back to back to give a disk-like structure with a central cavity, resembling the structure of eukaryotic proteasomes.

The protein resides in the cytoplasm. The catalysed reaction is Hydrolysis of proteins to small peptides in the presence of ATP and magnesium. alpha-casein is the usual test substrate. In the absence of ATP, only oligopeptides shorter than five residues are hydrolyzed (such as succinyl-Leu-Tyr-|-NHMec, and Leu-Tyr-Leu-|-Tyr-Trp, in which cleavage of the -Tyr-|-Leu- and -Tyr-|-Trp bonds also occurs).. Its function is as follows. Cleaves peptides in various proteins in a process that requires ATP hydrolysis. Has a chymotrypsin-like activity. Plays a major role in the degradation of misfolded proteins. This Methylobacterium radiotolerans (strain ATCC 27329 / DSM 1819 / JCM 2831 / NBRC 15690 / NCIMB 10815 / 0-1) protein is ATP-dependent Clp protease proteolytic subunit.